A 218-amino-acid polypeptide reads, in one-letter code: Carnitine transport permease protein OpuCB (218 aa).

An ABC transmembrane type-1 domain is found at 19–198 (TWQHLFISLS…ILALVVEFAL (180 aa)). A run of 5 helical transmembrane segments spans residues 23–43 (LFISLSAVILGIAVAVPTGIL), 48–68 (PKVANFVIGVVSVLQTVPSLA), 79–101 (VGTLPAIIALFIYALLPILRNTF), 149–169 (VIAWATLASYIGAGGLGDFIF), and 179–199 (LILGGAIPVTILALVVEFALG).

The protein belongs to the binding-protein-dependent transport system permease family. In terms of assembly, the complex is composed of two ATP-binding proteins (OpuCA), two transmembrane proteins (OpuCB and OpuCD) and a solute-binding protein (OpuCC).

The protein resides in the cell membrane. Part of the ABC transporter complex OpuCABCD involved in carnitine uptake. Probably responsible for the translocation of the substrate across the membrane. Involved, with BetL and GbuABC, in osmoprotection and cryoprotection of Listeria. The polypeptide is Carnitine transport permease protein OpuCB (opuCB) (Listeria monocytogenes).